Here is a 535-residue protein sequence, read N- to C-terminus: CTP synthase (535 aa).

Residues 1 to 267 form an amidoligase domain region; that stretch reads MTKYIFVTGG…DQIVCDHLKL (267 aa). Serine 13 contributes to the CTP binding site. Position 13 (serine 13) interacts with UTP. 14-19 lines the ATP pocket; it reads SLGKGI. Residue tyrosine 54 coordinates L-glutamine. Residue aspartate 71 coordinates ATP. Residues aspartate 71 and glutamate 141 each contribute to the Mg(2+) site. Residues 148–150, 188–193, and lysine 224 each bind CTP; these read DIE and KTKPTQ. UTP-binding positions include 188 to 193 and lysine 224; that span reads KTKPTQ. 240–242 provides a ligand contact to ATP; sequence RDA. Positions 292 to 534 constitute a Glutamine amidotransferase type-1 domain; sequence KIALVGKYVE…VRASITNKES (243 aa). Glycine 354 contacts L-glutamine. Catalysis depends on cysteine 381, which acts as the Nucleophile; for glutamine hydrolysis. Residues 382–385, glutamate 405, and arginine 462 each bind L-glutamine; that span reads LGMQ. Residues histidine 507 and glutamate 509 contribute to the active site.

This sequence belongs to the CTP synthase family. In terms of assembly, homotetramer.

The enzyme catalyses UTP + L-glutamine + ATP + H2O = CTP + L-glutamate + ADP + phosphate + 2 H(+). It carries out the reaction L-glutamine + H2O = L-glutamate + NH4(+). The catalysed reaction is UTP + NH4(+) + ATP = CTP + ADP + phosphate + 2 H(+). It participates in pyrimidine metabolism; CTP biosynthesis via de novo pathway; CTP from UDP: step 2/2. Its activity is regulated as follows. Allosterically activated by GTP, when glutamine is the substrate; GTP has no effect on the reaction when ammonia is the substrate. The allosteric effector GTP functions by stabilizing the protein conformation that binds the tetrahedral intermediate(s) formed during glutamine hydrolysis. Inhibited by the product CTP, via allosteric rather than competitive inhibition. Catalyzes the ATP-dependent amination of UTP to CTP with either L-glutamine or ammonia as the source of nitrogen. Regulates intracellular CTP levels through interactions with the four ribonucleotide triphosphates. The chain is CTP synthase from Bacillus cereus (strain AH187).